A 218-amino-acid polypeptide reads, in one-letter code: Peptide methionine sulfoxide reductase MsrA (218 aa).

Cys54 is a catalytic residue.

The protein belongs to the MsrA Met sulfoxide reductase family.

It carries out the reaction L-methionyl-[protein] + [thioredoxin]-disulfide + H2O = L-methionyl-(S)-S-oxide-[protein] + [thioredoxin]-dithiol. It catalyses the reaction [thioredoxin]-disulfide + L-methionine + H2O = L-methionine (S)-S-oxide + [thioredoxin]-dithiol. In terms of biological role, has an important function as a repair enzyme for proteins that have been inactivated by oxidation. Catalyzes the reversible oxidation-reduction of methionine sulfoxide in proteins to methionine. The protein is Peptide methionine sulfoxide reductase MsrA of Azorhizobium caulinodans (strain ATCC 43989 / DSM 5975 / JCM 20966 / LMG 6465 / NBRC 14845 / NCIMB 13405 / ORS 571).